The sequence spans 23 residues: Basic phospholipase A2 homolog Vur-S49 analog (23 aa).

The disordered stretch occupies residues 1–23; that stretch reads SVLEIGLMLQEETEKNPKTSYSI.

Post-translationally, contains 7 disulfide bonds. In terms of tissue distribution, expressed by the venom gland.

It is found in the secreted. In Vipera renardi (Steppe viper), this protein is Basic phospholipase A2 homolog Vur-S49 analog.